The following is a 468-amino-acid chain: Probable serine/threonine-protein phosphatase 2A activator 2 (468 aa).

Over residues 412–424 (STTTNNNNNNITS) the composition is skewed to low complexity. Residues 412–468 (STTTNNNNNNITSGDHCNDNEQQCSETHNHDHNHNHNHNHNHPPPPPQQQRSYFPLD) are disordered.

The protein belongs to the PTPA-type PPIase family.

The protein resides in the cytoplasm. It carries out the reaction [protein]-peptidylproline (omega=180) = [protein]-peptidylproline (omega=0). In terms of biological role, PPIases accelerate the folding of proteins. It catalyzes the cis-trans isomerization of proline imidic peptide bonds in oligopeptides. Acts as a regulatory subunit for PP2A-like phosphatases modulating their activity or substrate specificity, probably by inducing a conformational change in the catalytic subunit, a direct target of the PPIase. This is Probable serine/threonine-protein phosphatase 2A activator 2 (ppp2r4B) from Dictyostelium discoideum (Social amoeba).